Here is a 193-residue protein sequence, read N- to C-terminus: ATP synthase subunit b 1 (193 aa).

Residues 13 to 32 (PAVTGGDTHSGTGVPAEAHG) form a disordered region. The chain crosses the membrane as a helical span at residues 40–60 (ATFPSQLLWLAITFGLFYLFL).

This sequence belongs to the ATPase B chain family. In terms of assembly, F-type ATPases have 2 components, F(1) - the catalytic core - and F(0) - the membrane proton channel. F(1) has five subunits: alpha(3), beta(3), gamma(1), delta(1), epsilon(1). F(0) has three main subunits: a(1), b(2) and c(10-14). The alpha and beta chains form an alternating ring which encloses part of the gamma chain. F(1) is attached to F(0) by a central stalk formed by the gamma and epsilon chains, while a peripheral stalk is formed by the delta and b chains.

Its subcellular location is the cell inner membrane. In terms of biological role, f(1)F(0) ATP synthase produces ATP from ADP in the presence of a proton or sodium gradient. F-type ATPases consist of two structural domains, F(1) containing the extramembraneous catalytic core and F(0) containing the membrane proton channel, linked together by a central stalk and a peripheral stalk. During catalysis, ATP synthesis in the catalytic domain of F(1) is coupled via a rotary mechanism of the central stalk subunits to proton translocation. Component of the F(0) channel, it forms part of the peripheral stalk, linking F(1) to F(0). This chain is ATP synthase subunit b 1, found in Mesorhizobium japonicum (strain LMG 29417 / CECT 9101 / MAFF 303099) (Mesorhizobium loti (strain MAFF 303099)).